Here is a 179-residue protein sequence, read N- to C-terminus: Large ribosomal subunit protein uL5 (179 aa).

The protein belongs to the universal ribosomal protein uL5 family. In terms of assembly, part of the 50S ribosomal subunit; part of the 5S rRNA/L5/L18/L25 subcomplex. Contacts the 5S rRNA and the P site tRNA. Forms a bridge to the 30S subunit in the 70S ribosome.

This is one of the proteins that bind and probably mediate the attachment of the 5S RNA into the large ribosomal subunit, where it forms part of the central protuberance. In the 70S ribosome it contacts protein S13 of the 30S subunit (bridge B1b), connecting the 2 subunits; this bridge is implicated in subunit movement. Contacts the P site tRNA; the 5S rRNA and some of its associated proteins might help stabilize positioning of ribosome-bound tRNAs. The chain is Large ribosomal subunit protein uL5 from Bacillus pumilus (strain SAFR-032).